A 737-amino-acid chain; its full sequence is Catalase-peroxidase (737 aa).

The signal sequence occupies residues 1–23 (MLKKILPVLITLAIVHNTPTAWA). A cross-link (tryptophyl-tyrosyl-methioninium (Trp-Tyr) (with M-249)) is located at residues 102 to 223 (WHGAGTYRIY…LAATQMGLIY (122 aa)). H103 (proton acceptor) is an active-site residue. The tryptophyl-tyrosyl-methioninium (Tyr-Met) (with W-102) cross-link spans 223–249 (YVNPEGPNGKPDPVAAAKDIREAFARM). H264 is a heme b binding site.

The protein belongs to the peroxidase family. Peroxidase/catalase subfamily. Homodimer or homotetramer. Heme b serves as cofactor. Post-translationally, formation of the three residue Trp-Tyr-Met cross-link is important for the catalase, but not the peroxidase activity of the enzyme.

It catalyses the reaction H2O2 + AH2 = A + 2 H2O. The enzyme catalyses 2 H2O2 = O2 + 2 H2O. Bifunctional enzyme with both catalase and broad-spectrum peroxidase activity. This chain is Catalase-peroxidase, found in Yersinia pseudotuberculosis serotype O:3 (strain YPIII).